Reading from the N-terminus, the 892-residue chain is Putative GTP diphosphokinase RSH1, chloroplastic (892 aa).

The N-terminal 52 residues, 1 to 52, are a transit peptide targeting the chloroplast; that stretch reads MQPPTGAVSGSSSSSLECVSSCRTSWRGGGRPYECSVLSCAWNAPRALTGAL. An HD domain is found at 184–291; sequence FIIHPVEVAR…VKLADRLHNM (108 aa). The 64-residue stretch at 574–637 folds into the TGS domain; sequence LGSRVFVFTP…ANAEVVEIII (64 aa). In terms of domain architecture, ACT spans 809–880; sequence WLCIVCVDRK…MILGVLGWSV (72 aa).

Belongs to the RelA/SpoT family.

It localises to the plastid. The protein resides in the chloroplast. The catalysed reaction is GTP + ATP = guanosine 3'-diphosphate 5'-triphosphate + AMP. In terms of biological role, may be involved in a rapid plant ppGpp (guanosine 3'-diphosphate 5'-diphosphate)-mediated response to pathogens and other stresses. In Oryza sativa subsp. japonica (Rice), this protein is Putative GTP diphosphokinase RSH1, chloroplastic (RSH1).